We begin with the raw amino-acid sequence, 143 residues long: uncharacterized protein (143 aa).

The N-terminal 38 residues, 1 to 38, are a transit peptide targeting the mitochondrion; sequence MKYWKYLSQLTIRRPLTYNNALLYRNRFPSILTWKRSA.

Its subcellular location is the mitochondrion. This is an uncharacterized protein from Schizosaccharomyces pombe (strain 972 / ATCC 24843) (Fission yeast).